A 292-amino-acid chain; its full sequence is MGRQKELMNRCGEMLHIRYRLLRQALAECLGTLILVMFGCGSVAQVVLSRGTHGGFLTINLAFGFAVTLGILVAGQVSGAHLNPAVTFAMCFLAREPWIKLPIYALAQTLGAFLGAGIVFGLYYDAIWAFANNELFVSGPNGTAGIFATYPSGHLDMVNGFFDQFIGTAALIVCVLAIVDPYNNPVPRGLEAFTVGLVVLVIGTSMGFNSGYAVNPARDFGPRLFTALAGWGSEVFTTGRHWWWVPIVSPLLGSIAGVFVYQLMIGCHLEQPPPSTEEENVKLAHMKHKEQI.

Residues 1 to 24 are Cytoplasmic-facing; sequence MGRQKELMNRCGEMLHIRYRLLRQ. A helical membrane pass occupies residues 25–42; it reads ALAECLGTLILVMFGCGS. The Extracellular segment spans residues 43–56; it reads VAQVVLSRGTHGGF. A helical membrane pass occupies residues 57–74; the sequence is LTINLAFGFAVTLGILVA. The Cytoplasmic segment spans residues 75–78; that stretch reads GQVS. The segment at residues 79–92 is an intramembrane region (discontinuously helical); the sequence is GAHLNPAVTFAMCF. Positions 83–85 match the NPA 1 motif; sequence NPA. Residues 93–100 are Cytoplasmic-facing; that stretch reads LAREPWIK. Residues 101 to 121 form a helical membrane-spanning segment; sequence LPIYALAQTLGAFLGAGIVFG. Topologically, residues 122–159 are extracellular; it reads LYYDAIWAFANNELFVSGPNGTAGIFATYPSGHLDMVN. Asn-141 carries an N-linked (GlcNAc...) asparagine glycan. A helical membrane pass occupies residues 160–177; the sequence is GFFDQFIGTAALIVCVLA. Topologically, residues 178–189 are cytoplasmic; sequence IVDPYNNPVPRG. Residues 190-206 traverse the membrane as a helical segment; that stretch reads LEAFTVGLVVLVIGTSM. At 207 to 210 the chain is on the extracellular side; sequence GFNS. An intramembrane region (discontinuously helical) is located at residues 211-224; that stretch reads GYAVNPARDFGPRL. The NPA 2 signature appears at 215 to 217; it reads NPA. Over 225 to 242 the chain is Extracellular; the sequence is FTALAGWGSEVFTTGRHW. The helical transmembrane segment at 243–264 threads the bilayer; sequence WWVPIVSPLLGSIAGVFVYQLM. Over 265-292 the chain is Cytoplasmic; it reads IGCHLEQPPPSTEEENVKLAHMKHKEQI.

Belongs to the MIP/aquaporin (TC 1.A.8) family. Homotetramer; each monomer provides an independent glycerol/water pore. Could also exist in other oligomeric states. As to expression, detected in principal cells in collecting ducts in kidney medulla (at protein level). Renal medulla and colon. Predominantly in the inner medulla. Expressed in basal layer of epidermal keratinocytes.

It is found in the cell membrane. Its subcellular location is the basolateral cell membrane. It carries out the reaction glycerol(in) = glycerol(out). The enzyme catalyses H2O(in) = H2O(out). The catalysed reaction is urea(in) = urea(out). It catalyses the reaction H2O2(out) = H2O2(in). Its function is as follows. Aquaglyceroporins form homotetrameric transmembrane channels, with each monomer independently mediating glycerol and water transport across the plasma membrane along their osmotic gradient. Could also be permeable to urea. Also participates in cell permeability to H2O2 and H2O2-mediated signaling. In skin, transports glycerol to the epidermis and stratum corneum, where it maintains hydration, elasticity, and supports lipid biosynthesis for barrier repair. In kidney, contributes to the reabsorption of water, helping the body maintain proper fluid balance. The chain is Aquaporin-3 from Mus musculus (Mouse).